A 218-amino-acid polypeptide reads, in one-letter code: Hypoxanthine-guanine phosphoribosyltransferase (218 aa).

N-acetylalanine is present on alanine 2. GMP is bound at residue lysine 69. Lysine 103 is subject to N6-acetyllysine. Lysine 115 participates in a covalent cross-link: Glycyl lysine isopeptide (Lys-Gly) (interchain with G-Cter in SUMO1); alternate. Lysine 115 is covalently cross-linked (Glycyl lysine isopeptide (Lys-Gly) (interchain with G-Cter in SUMO2); alternate). GMP contacts are provided by residues 134 to 142, lysine 166, 186 to 188, and aspartate 194; these read EDIIDTGKT and KFV. The Proton acceptor role is filled by aspartate 138. At threonine 142 the chain carries Phosphothreonine. Aspartate 194 serves as a coordination point for Mg(2+).

This sequence belongs to the purine/pyrimidine phosphoribosyltransferase family. In terms of assembly, homotetramer. Requires Mg(2+) as cofactor.

The protein localises to the cytoplasm. The catalysed reaction is IMP + diphosphate = hypoxanthine + 5-phospho-alpha-D-ribose 1-diphosphate. The enzyme catalyses GMP + diphosphate = guanine + 5-phospho-alpha-D-ribose 1-diphosphate. The protein operates within purine metabolism; IMP biosynthesis via salvage pathway; IMP from hypoxanthine: step 1/1. Its function is as follows. Converts guanine to guanosine monophosphate, and hypoxanthine to inosine monophosphate. Transfers the 5-phosphoribosyl group from 5-phosphoribosylpyrophosphate onto the purine. Plays a central role in the generation of purine nucleotides through the purine salvage pathway. This chain is Hypoxanthine-guanine phosphoribosyltransferase (HPRT1), found in Pan troglodytes (Chimpanzee).